Here is a 319-residue protein sequence, read N- to C-terminus: 4-hydroxy-3-methylbut-2-enyl diphosphate reductase (319 aa).

[4Fe-4S] cluster is bound at residue Cys17. (2E)-4-hydroxy-3-methylbut-2-enyl diphosphate is bound by residues His46 and His79. Residues His46 and His79 each coordinate dimethylallyl diphosphate. The isopentenyl diphosphate site is built by His46 and His79. Cys101 is a binding site for [4Fe-4S] cluster. A (2E)-4-hydroxy-3-methylbut-2-enyl diphosphate-binding site is contributed by His129. His129 is a binding site for dimethylallyl diphosphate. Residue His129 coordinates isopentenyl diphosphate. Glu131 functions as the Proton donor in the catalytic mechanism. Thr170 is a binding site for (2E)-4-hydroxy-3-methylbut-2-enyl diphosphate. Residue Cys200 participates in [4Fe-4S] cluster binding. (2E)-4-hydroxy-3-methylbut-2-enyl diphosphate is bound by residues Ser228, Ser229, Asn230, and Ser273. Residues Ser228, Ser229, Asn230, and Ser273 each coordinate dimethylallyl diphosphate. The isopentenyl diphosphate site is built by Ser228, Ser229, Asn230, and Ser273.

This sequence belongs to the IspH family. It depends on [4Fe-4S] cluster as a cofactor.

It carries out the reaction isopentenyl diphosphate + 2 oxidized [2Fe-2S]-[ferredoxin] + H2O = (2E)-4-hydroxy-3-methylbut-2-enyl diphosphate + 2 reduced [2Fe-2S]-[ferredoxin] + 2 H(+). It catalyses the reaction dimethylallyl diphosphate + 2 oxidized [2Fe-2S]-[ferredoxin] + H2O = (2E)-4-hydroxy-3-methylbut-2-enyl diphosphate + 2 reduced [2Fe-2S]-[ferredoxin] + 2 H(+). It participates in isoprenoid biosynthesis; dimethylallyl diphosphate biosynthesis; dimethylallyl diphosphate from (2E)-4-hydroxy-3-methylbutenyl diphosphate: step 1/1. It functions in the pathway isoprenoid biosynthesis; isopentenyl diphosphate biosynthesis via DXP pathway; isopentenyl diphosphate from 1-deoxy-D-xylulose 5-phosphate: step 6/6. In terms of biological role, catalyzes the conversion of 1-hydroxy-2-methyl-2-(E)-butenyl 4-diphosphate (HMBPP) into a mixture of isopentenyl diphosphate (IPP) and dimethylallyl diphosphate (DMAPP). Acts in the terminal step of the DOXP/MEP pathway for isoprenoid precursor biosynthesis. In Cereibacter sphaeroides (strain ATCC 17023 / DSM 158 / JCM 6121 / CCUG 31486 / LMG 2827 / NBRC 12203 / NCIMB 8253 / ATH 2.4.1.) (Rhodobacter sphaeroides), this protein is 4-hydroxy-3-methylbut-2-enyl diphosphate reductase.